The sequence spans 123 residues: Protein Wnt-3a (123 aa).

A lipid anchor (O-palmitoleoyl serine) is attached at Ser-1. The cysteines at positions 89 and 104 are disulfide-linked. N-linked (GlcNAc...) asparagine glycosylation is present at Asn-90.

The protein belongs to the Wnt family. In terms of processing, disulfide bonds have critical and distinct roles in secretion and activity. Loss of each conserved cysteine results in high molecular weight oxidized Wnt oligomers, which are formed through inter-Wnt disulfide bonding. Post-translationally, palmitoleoylation is required for efficient binding to frizzled receptors. Depalmitoleoylation leads to Wnt signaling pathway inhibition.

The protein resides in the secreted. It localises to the extracellular space. Its subcellular location is the extracellular matrix. Its function is as follows. Ligand for members of the frizzled family of seven transmembrane receptors. Functions in the canonical Wnt signaling pathway that results in activation of transcription factors of the TCF/LEF family. Required for normal embryonic mesoderm development and formation of caudal somites. Required for normal morphogenesis of the developing neural tube. This is Protein Wnt-3a (WNT-3A) from Alopias vulpinus (Common thresher shark).